We begin with the raw amino-acid sequence, 292 residues long: NAD kinase (292 aa).

The Proton acceptor role is filled by Asp73. Residues 73–74, 147–148, His158, Arg175, Asp177, 188–193, and Gln248 each bind NAD(+); these read DG, NE, and TGYSLS.

The protein belongs to the NAD kinase family. A divalent metal cation is required as a cofactor.

It is found in the cytoplasm. It catalyses the reaction NAD(+) + ATP = ADP + NADP(+) + H(+). In terms of biological role, involved in the regulation of the intracellular balance of NAD and NADP, and is a key enzyme in the biosynthesis of NADP. Catalyzes specifically the phosphorylation on 2'-hydroxyl of the adenosine moiety of NAD to yield NADP. The sequence is that of NAD kinase from Buchnera aphidicola subsp. Baizongia pistaciae (strain Bp).